We begin with the raw amino-acid sequence, 141 residues long: uncharacterized protein (141 aa).

This is an uncharacterized protein from Schizosaccharomyces pombe (strain 972 / ATCC 24843) (Fission yeast).